The chain runs to 127 residues: Glycine cleavage system H protein (127 aa).

In terms of domain architecture, Lipoyl-binding spans 24–106 (TATIGITDYA…YAEGWMLKLK (83 aa)). N6-lipoyllysine is present on Lys-65.

Belongs to the GcvH family. As to quaternary structure, the glycine cleavage system is composed of four proteins: P, T, L and H. (R)-lipoate serves as cofactor.

Its function is as follows. The glycine cleavage system catalyzes the degradation of glycine. The H protein shuttles the methylamine group of glycine from the P protein to the T protein. In Opitutus terrae (strain DSM 11246 / JCM 15787 / PB90-1), this protein is Glycine cleavage system H protein.